Here is a 179-residue protein sequence, read N- to C-terminus: Large ribosomal subunit protein uL5 (179 aa).

The protein belongs to the universal ribosomal protein uL5 family. In terms of assembly, part of the 50S ribosomal subunit; part of the 5S rRNA/L5/L18/L25 subcomplex. Contacts the 5S rRNA and the P site tRNA. Forms a bridge to the 30S subunit in the 70S ribosome.

This is one of the proteins that bind and probably mediate the attachment of the 5S RNA into the large ribosomal subunit, where it forms part of the central protuberance. In the 70S ribosome it contacts protein S13 of the 30S subunit (bridge B1b), connecting the 2 subunits; this bridge is implicated in subunit movement. Contacts the P site tRNA; the 5S rRNA and some of its associated proteins might help stabilize positioning of ribosome-bound tRNAs. The chain is Large ribosomal subunit protein uL5 from Prochlorococcus marinus (strain NATL1A).